A 138-amino-acid polypeptide reads, in one-letter code: Large ribosomal subunit protein uL16 (138 aa).

Positions 1 to 13 (MLQPARRKYRKEQ) are enriched in basic residues. Residues 1–22 (MLQPARRKYRKEQKGRNTGVAT) are disordered.

This sequence belongs to the universal ribosomal protein uL16 family. Part of the 50S ribosomal subunit.

Binds 23S rRNA and is also seen to make contacts with the A and possibly P site tRNAs. The chain is Large ribosomal subunit protein uL16 from Paracidovorax citrulli (strain AAC00-1) (Acidovorax citrulli).